A 264-amino-acid polypeptide reads, in one-letter code: Tryptophan synthase alpha chain (264 aa).

Active-site proton acceptor residues include E49 and D60.

This sequence belongs to the TrpA family. Tetramer of two alpha and two beta chains.

The enzyme catalyses (1S,2R)-1-C-(indol-3-yl)glycerol 3-phosphate + L-serine = D-glyceraldehyde 3-phosphate + L-tryptophan + H2O. It participates in amino-acid biosynthesis; L-tryptophan biosynthesis; L-tryptophan from chorismate: step 5/5. Its function is as follows. The alpha subunit is responsible for the aldol cleavage of indoleglycerol phosphate to indole and glyceraldehyde 3-phosphate. This Geobacter sulfurreducens (strain ATCC 51573 / DSM 12127 / PCA) protein is Tryptophan synthase alpha chain.